The chain runs to 210 residues: Proteasome subunit beta 2 (210 aa).

Positions 1 to 12 are cleaved as a propeptide — removed in mature form; by autocatalysis; it reads MSNNVEEKILHG. Threonine 13 serves as the catalytic Nucleophile.

The protein belongs to the peptidase T1B family. In terms of assembly, the 20S proteasome core is composed of 14 alpha and 14 beta subunits that assemble into four stacked heptameric rings, resulting in a barrel-shaped structure. The two inner rings, each composed of seven catalytic beta subunits, are sandwiched by two outer rings, each composed of seven alpha subunits. The catalytic chamber with the active sites is on the inside of the barrel. Has a gated structure, the ends of the cylinder being occluded by the N-termini of the alpha-subunits. Is capped at one or both ends by the proteasome regulatory ATPase, PAN.

It is found in the cytoplasm. It catalyses the reaction Cleavage of peptide bonds with very broad specificity.. Its activity is regulated as follows. The formation of the proteasomal ATPase PAN-20S proteasome complex, via the docking of the C-termini of PAN into the intersubunit pockets in the alpha-rings, triggers opening of the gate for substrate entry. Interconversion between the open-gate and close-gate conformations leads to a dynamic regulation of the 20S proteasome proteolysis activity. Functionally, component of the proteasome core, a large protease complex with broad specificity involved in protein degradation. The polypeptide is Proteasome subunit beta 2 (Nitrosopumilus maritimus (strain SCM1)).